The sequence spans 199 residues: Thymidylate kinase (199 aa).

7-14 is an ATP binding site; sequence GIDGSGKS.

The protein belongs to the thymidylate kinase family.

The catalysed reaction is dTMP + ATP = dTDP + ADP. Functionally, phosphorylation of dTMP to form dTDP in both de novo and salvage pathways of dTTP synthesis. This is Thymidylate kinase from Thermosipho melanesiensis (strain DSM 12029 / CIP 104789 / BI429).